The primary structure comprises 301 residues: General transcription and DNA repair factor IIH subunit TFB4 (301 aa).

The C4-type zinc-finger motif lies at 259-276 (CSVCLSIFCEHHKKCSTC).

Belongs to the TFB4 family. Component of the 7-subunit TFIIH core complex composed of XPB, XPD, TFB1/GTF2H1, GTF2H2/P44, TFB4/GTF2H3, TFB2/GTF2H4 and TFB5/GTF2H5, which is active in NER. The core complex associates with the 3-subunit CDK-activating kinase (CAK) module composed of CYCH1/cyclin H1, CDKD and MAT1/At4g30820 to form the 10-subunit holoenzyme (holo-TFIIH) active in transcription.

It localises to the nucleus. In terms of biological role, component of the general transcription and DNA repair factor IIH (TFIIH) core complex, which is involved in general and transcription-coupled nucleotide excision repair (NER) of damaged DNA and, when complexed to CAK, in RNA transcription by RNA polymerase II. In NER, TFIIH acts by opening DNA around the lesion to allow the excision of the damaged oligonucleotide and its replacement by a new DNA fragment. In transcription, TFIIH has an essential role in transcription initiation. When the pre-initiation complex (PIC) has been established, TFIIH is required for promoter opening and promoter escape. Phosphorylation of the C-terminal tail (CTD) of the largest subunit of RNA polymerase II by the kinase module CAK controls the initiation of transcription. The protein is General transcription and DNA repair factor IIH subunit TFB4 of Arabidopsis thaliana (Mouse-ear cress).